Consider the following 122-residue polypeptide: Small ribosomal subunit protein uS13 (122 aa).

The tract at residues 95–122 is disordered; the sequence is GLPVRGQRTKTNARTRKGPKKTIAGKKK.

This sequence belongs to the universal ribosomal protein uS13 family. In terms of assembly, part of the 30S ribosomal subunit. Forms a loose heterodimer with protein S19. Forms two bridges to the 50S subunit in the 70S ribosome.

Its function is as follows. Located at the top of the head of the 30S subunit, it contacts several helices of the 16S rRNA. In the 70S ribosome it contacts the 23S rRNA (bridge B1a) and protein L5 of the 50S subunit (bridge B1b), connecting the 2 subunits; these bridges are implicated in subunit movement. Contacts the tRNAs in the A and P-sites. The polypeptide is Small ribosomal subunit protein uS13 (Corynebacterium aurimucosum (strain ATCC 700975 / DSM 44827 / CIP 107346 / CN-1) (Corynebacterium nigricans)).